The following is a 40-amino-acid chain: uncharacterized protein (40 aa).

Positions 1–17 are cleaved as a signal peptide; it reads MAVAALAMYGGTCGACA.

This is an uncharacterized protein from Archaeoglobus fulgidus (strain ATCC 49558 / DSM 4304 / JCM 9628 / NBRC 100126 / VC-16).